We begin with the raw amino-acid sequence, 311 residues long: Cell division protein ZipA (311 aa).

At 1–5 (MQELR) the chain is on the periplasmic side. The helical transmembrane segment at 6-26 (FVLIVVGALAIMALLFHGLWT) threads the bilayer. Residues 27 to 311 (SKKEGKAKFG…QIVEFKAANA (285 aa)) are Cytoplasmic-facing. Positions 32–54 (KAKFGDKPLSKLDLGESEPKESE) are enriched in basic and acidic residues. Residues 32-60 (KAKFGDKPLSKLDLGESEPKESEMYVAPE) form a disordered region.

This sequence belongs to the ZipA family. As to quaternary structure, interacts with FtsZ via their C-terminal domains.

It is found in the cell inner membrane. Functionally, essential cell division protein that stabilizes the FtsZ protofilaments by cross-linking them and that serves as a cytoplasmic membrane anchor for the Z ring. Also required for the recruitment to the septal ring of downstream cell division proteins. The polypeptide is Cell division protein ZipA (Vibrio vulnificus (strain CMCP6)).